The sequence spans 1171 residues: MSLRFVIGRAGSGKSTLCLHEVQEELKQRPRGKTILYLVPEQMTFQTQQALIGSEDVRGSIRAQVFSFSRLAWKVLQEVGGASRLHIDEAGVHMLLRKIVESRKDGLSVFQKAAEQNGFFEHLGSMIAEFKRYNVTPSNVYEMWQQLDTHSSSAEQKLLANKVYDLQLLYDDFERALIGKYLDSEDYLQLLIEKLSDSEYVKGAEIYIDGFHSFSPQELEIVRGLMRLGTRVTITLTIDEKTLAQPVNELDLFYETTLTYERIKQVAREEKIEVEKTIPLMKQPRFHSQALAHLEMHYEARPNEKFHGEASVTISTAANLRAEVEGVAREIRRLVATEDYRYRDIAVLLRNGESYYDVMRTLFTDYNIPHFIDEKRPMSHHPLVECIRSALEIISGNWRYDAVFRCVKTELLYPLDVRKEAMREEMDEFENYCLAYGVQGKRWTSEDPWMYRRYRSLDDASEMITDSEREMEEKINRLRDVVRTPVIRMQKRLKRAGTVMQMCEAVYLFLEELDVPKKLEALRIRAEESGDFLFATDHEQVWEEVMSLLDTFVEMLGEEKMSLSMFTDVMTTGLEALQFANIPPSLDQVLVANIDHSRLSDIKATFIIGVNEGVIPAAPMDEGMLSDEERNVLTAAGIELAPTTRQTLLEEQFVMYQMVTRASEKLYISCPLADEEGKTLLASSFIKKIKRMFPDVKESFITNDVNDLSRSEQLSYVATPEVTLSYVMQQLQTWKRYGFEGNLDFWWDVYNFYVTSDEWKQKSSRVLSSLFYRNRAQKLSTDVSRDLYGDTIKGSVSRMELFNRCAYAHFAQHGLSLRERDIFKLDAPDIGELFHAALKRIADKLLRENRTWADLSIKECEHLSALVIEEIAPLLQRQILLSSNRHFYLKQKLQQIIFRTSLILREHAKSSGFVPVDLEVPFGMGGTGSLPPMEFALPNGVKMEVVGRIDRVDKAEDESGTFLRIIDYKSSSKALDLTEVYYGLALQMLTYLDVVTSNAHTWMKKGSTASPAGVLYFHIHNPIVEMKGDASEEEIEKEILKKFKMKGLVLGDADVVRLMDNKLSTGSSDIISAGLKKDGSFSARSSIASEQEFNVLQKYVHHSFENIGKDITEGVIDIAPYKKGNKAACTFCNFKSVCQFDESLEDNQFRTLKDMKDSEAMEKIREEVGGE.

Residues 1–301 form the UvrD-like helicase ATP-binding domain; the sequence is MSLRFVIGRA…AHLEMHYEAR (301 aa). 8–15 contacts ATP; that stretch reads GRAGSGKS. Residues 281 to 587 form the UvrD-like helicase C-terminal domain; the sequence is MKQPRFHSQA…QFANIPPSLD (307 aa). Residues Cys805, Cys1129, Cys1132, and Cys1138 each contribute to the [4Fe-4S] cluster site.

Belongs to the helicase family. AddB/RexB type 1 subfamily. Heterodimer of AddA and AddB. Mg(2+) serves as cofactor. The cofactor is [4Fe-4S] cluster.

Its function is as follows. The heterodimer acts as both an ATP-dependent DNA helicase and an ATP-dependent, dual-direction single-stranded exonuclease. Recognizes the chi site generating a DNA molecule suitable for the initiation of homologous recombination. The AddB subunit has 5' -&gt; 3' nuclease activity but not helicase activity. In Bacillus mycoides (strain KBAB4) (Bacillus weihenstephanensis), this protein is ATP-dependent helicase/deoxyribonuclease subunit B.